A 599-amino-acid chain; its full sequence is Chaperone protein DnaK (599 aa).

A Phosphothreonine; by autocatalysis modification is found at T187. Residues 575–599 (AQQAATENSKDSDTVEAEIVDDKAN) form a disordered region.

The protein belongs to the heat shock protein 70 family.

In terms of biological role, acts as a chaperone. This Mycoplasmopsis pulmonis (strain UAB CTIP) (Mycoplasma pulmonis) protein is Chaperone protein DnaK.